A 131-amino-acid chain; its full sequence is Fatty acid-binding protein (131 aa).

(5Z,8Z,11Z,14Z)-eicosatetraenoate is bound by residues R106 and 126–128 (RPY). (9Z)-octadecenoate contacts are provided by residues R106 and 126-128 (RPY).

It belongs to the calycin superfamily. Fatty-acid binding protein (FABP) family.

The protein resides in the cytoplasm. Its function is as follows. FABPs are thought to play a role in the intracellular transport of long-chain fatty acids and their acyl-CoA esters. The chain is Fatty acid-binding protein from Lepidoglyphus destructor (Storage mite).